The sequence spans 397 residues: Odorant receptor 22b (397 aa).

The Cytoplasmic segment spans residues 1-49; the sequence is MLSQFFPHIKEKPLSERVKSRDAFVYLDRVMWSFGWTVPENKRWDLHYK. Residues 50–70 traverse the membrane as a helical segment; sequence LWSTFVTLLIFILLPISVSVE. Residues 71–85 are Extracellular-facing; sequence YIQRFKTFSAGEFLS. Residues 86-105 form a helical membrane-spanning segment; the sequence is SIQIGVNMYGSSFKSYLTMM. The Cytoplasmic portion of the chain corresponds to 106 to 143; sequence GYKKRQEAKMSLDELDKRCVCDEERTIVHRHVALGNFC. Residues 144–164 traverse the membrane as a helical segment; it reads YIFYHIAYTSFLISNFLSFIM. Residues 165 to 194 are Extracellular-facing; it reads KRIHAWRMYFPYVDPEKQFYISSIAEVILR. The chain crosses the membrane as a helical span at residues 195 to 215; that stretch reads GWAVFMDLCTDVCPLISMVIA. The Cytoplasmic segment spans residues 216-268; sequence RCHITLLKQRLRNLRSEPGRTEDEYLKELADCVRDHRLILDYVDALRSVFSGT. Residues 269 to 289 form a helical membrane-spanning segment; the sequence is IFVQFLLIGIVLGLSMINIMF. The Extracellular portion of the chain corresponds to 290 to 295; it reads FSTLST. Residues 296–316 form a helical membrane-spanning segment; the sequence is GVAVVLFMSCVSMQTFPFCYL. Residues 317 to 347 are Cytoplasmic-facing; sequence CNMIMDDCQEMADSLFQSDWTSADRRYKSTL. The chain crosses the membrane as a helical span at residues 348–368; it reads VYFLHNLQQPIILTAGGVFPI. At 369–397 the chain is on the extracellular side; sequence SMQTNLNMVKLAFTVVTIVKQFNLAEKFQ.

The protein belongs to the insect chemoreceptor superfamily. Heteromeric odorant receptor channel (TC 1.A.69) family. Or2a subfamily. As to quaternary structure, interacts with Orco, via conserved C-terminal cytoplasmic loops. Complexes exist early in the endomembrane system in olfactory sensory neurons (OSNs), coupling these complexes to the conserved ciliary trafficking pathway. In terms of tissue distribution, expressed with Orco in 20-22 sensory neurons on the medial-proximal edge of the antenna. This expression pattern matches the distribution of the large sensilla basiconica. Expression is first seen at 60 hours APF in a subset of cells restricted to a subregion of the developing antenna. Expression continues throughout antennal development. Expressed in the ab3A neuron which responds to ethyl butyrate.

It is found in the cell membrane. In terms of biological role, odorant receptor which mediates acceptance or avoidance behavior, depending on its substrates. The odorant receptor repertoire encodes a large collection of odor stimuli that vary widely in identity, intensity, and duration. Involved in the behavioral responses to esters. Complexes with Orco to form odorant-sensing units, providing sensitive and prolonged odorant signaling and calcium permeability. They are necessary and sufficient to promote functional reconstitution of odor-evoked signaling in sensory neurons that normally respond only to carbon dioxide. This is Odorant receptor 22b (Or22b) from Drosophila melanogaster (Fruit fly).